The following is a 484-amino-acid chain: UDP-N-acetylmuramoyl-L-alanyl-D-glutamate--2,6-diaminopimelate ligase (484 aa).

A UDP-N-acetyl-alpha-D-muramoyl-L-alanyl-D-glutamate-binding site is contributed by serine 30. Glycine 109–serine 115 lines the ATP pocket. UDP-N-acetyl-alpha-D-muramoyl-L-alanyl-D-glutamate-binding positions include threonine 151–threonine 152, serine 178, and arginine 186. The residue at position 218 (lysine 218) is an N6-carboxylysine. Residues arginine 379, aspartate 403–arginine 406, glycine 455, and glutamate 459 contribute to the meso-2,6-diaminopimelate site. The short motif at aspartate 403 to arginine 406 is the Meso-diaminopimelate recognition motif element.

It belongs to the MurCDEF family. MurE subfamily. It depends on Mg(2+) as a cofactor. Post-translationally, carboxylation is probably crucial for Mg(2+) binding and, consequently, for the gamma-phosphate positioning of ATP.

It localises to the cytoplasm. It carries out the reaction UDP-N-acetyl-alpha-D-muramoyl-L-alanyl-D-glutamate + meso-2,6-diaminopimelate + ATP = UDP-N-acetyl-alpha-D-muramoyl-L-alanyl-gamma-D-glutamyl-meso-2,6-diaminopimelate + ADP + phosphate + H(+). It participates in cell wall biogenesis; peptidoglycan biosynthesis. Functionally, catalyzes the addition of meso-diaminopimelic acid to the nucleotide precursor UDP-N-acetylmuramoyl-L-alanyl-D-glutamate (UMAG) in the biosynthesis of bacterial cell-wall peptidoglycan. The polypeptide is UDP-N-acetylmuramoyl-L-alanyl-D-glutamate--2,6-diaminopimelate ligase (Clostridioides difficile (strain 630) (Peptoclostridium difficile)).